Here is a 117-residue protein sequence, read N- to C-terminus: Hydrogenase maturation factor HypA (117 aa).

Residue His-2 coordinates Ni(2+). Cys-73, Cys-76, Cys-89, and Cys-92 together coordinate Zn(2+).

Belongs to the HypA/HybF family.

Functionally, involved in the maturation of [NiFe] hydrogenases. Required for nickel insertion into the metal center of the hydrogenase. The chain is Hydrogenase maturation factor HypA from Pelodictyon phaeoclathratiforme (strain DSM 5477 / BU-1).